Consider the following 278-residue polypeptide: MDVRQSIHSAHAKTLDTQGLRNEFLVEKVFVADEYTMVYSHIDRIIVGGIMPVTKTVSVGGEVGKQLGVSYFLERRELGVINIGGAGTIAVDGQCYEIGHRDALYVGKGAKEVVFASIDTATPAKFYYNCAPAHTTYPTKKVTPDEVSPVTLGDNLTSNRRTINKYFVPDVLETCQLSMGLTELAPGNLWNTMPCHTHERRMEVYFYFNMDDDACVFHMMGQPQETRHIVMHNEQAVISPSWSIHSGVGTKAYTFIWGMVGENQVFDDMDHVAVKDLR.

The Zn(2+) site is built by His196, His198, Glu203, and His245.

It belongs to the KduI family. As to quaternary structure, homohexamer. Zn(2+) serves as cofactor.

The catalysed reaction is 5-dehydro-4-deoxy-D-glucuronate = 3-deoxy-D-glycero-2,5-hexodiulosonate. The protein operates within glycan metabolism; pectin degradation; 2-dehydro-3-deoxy-D-gluconate from pectin: step 4/5. Catalyzes the isomerization of 5-dehydro-4-deoxy-D-glucuronate to 3-deoxy-D-glycero-2,5-hexodiulosonate. This is 4-deoxy-L-threo-5-hexosulose-uronate ketol-isomerase from Escherichia coli O139:H28 (strain E24377A / ETEC).